The following is a 462-amino-acid chain: Glutamate-1-semialdehyde 2,1-aminomutase (462 aa).

The disordered stretch occupies residues 178–200 (DDPQRPASPRSQSSRGLPSSPGV). Residues 182–192 (RPASPRSQSSR) are compositionally biased toward low complexity. K297 is subject to N6-(pyridoxal phosphate)lysine.

It belongs to the class-III pyridoxal-phosphate-dependent aminotransferase family. HemL subfamily. Homodimer. Pyridoxal 5'-phosphate is required as a cofactor.

The protein resides in the cytoplasm. The catalysed reaction is (S)-4-amino-5-oxopentanoate = 5-aminolevulinate. Its pathway is porphyrin-containing compound metabolism; protoporphyrin-IX biosynthesis; 5-aminolevulinate from L-glutamyl-tRNA(Glu): step 2/2. The polypeptide is Glutamate-1-semialdehyde 2,1-aminomutase (hemL) (Mycobacterium bovis (strain ATCC BAA-935 / AF2122/97)).